We begin with the raw amino-acid sequence, 405 residues long: Probable tRNA sulfurtransferase (405 aa).

Residues 60–165 form the THUMP domain; it reads EGVIERLRHV…QDAIYLTNQV (106 aa). Residues 183–184, 208–209, Arg-265, Gly-287, and Gln-296 contribute to the ATP site; these read ML and HF.

The protein belongs to the ThiI family.

It localises to the cytoplasm. The catalysed reaction is [ThiI sulfur-carrier protein]-S-sulfanyl-L-cysteine + a uridine in tRNA + 2 reduced [2Fe-2S]-[ferredoxin] + ATP + H(+) = [ThiI sulfur-carrier protein]-L-cysteine + a 4-thiouridine in tRNA + 2 oxidized [2Fe-2S]-[ferredoxin] + AMP + diphosphate. The enzyme catalyses [ThiS sulfur-carrier protein]-C-terminal Gly-Gly-AMP + S-sulfanyl-L-cysteinyl-[cysteine desulfurase] + AH2 = [ThiS sulfur-carrier protein]-C-terminal-Gly-aminoethanethioate + L-cysteinyl-[cysteine desulfurase] + A + AMP + 2 H(+). It participates in cofactor biosynthesis; thiamine diphosphate biosynthesis. Its function is as follows. Catalyzes the ATP-dependent transfer of a sulfur to tRNA to produce 4-thiouridine in position 8 of tRNAs, which functions as a near-UV photosensor. Also catalyzes the transfer of sulfur to the sulfur carrier protein ThiS, forming ThiS-thiocarboxylate. This is a step in the synthesis of thiazole, in the thiamine biosynthesis pathway. The sulfur is donated as persulfide by IscS. In Latilactobacillus sakei subsp. sakei (strain 23K) (Lactobacillus sakei subsp. sakei), this protein is Probable tRNA sulfurtransferase.